Consider the following 186-residue polypeptide: Quinone reductase (186 aa).

FMN is bound by residues 13-20 (SLRKESYN), 80-83 (EYNR), and Ser116.

Belongs to the SsuE family. In terms of assembly, homotetramer. Dimer of dimers. The tetrameric configuration has a central role in chromate reductase activity. It depends on FMN as a cofactor.

The enzyme catalyses a quinone + NADH + H(+) = a quinol + NAD(+). It catalyses the reaction a quinone + NADPH + H(+) = a quinol + NADP(+). It carries out the reaction Cr(6+) + 2 NADH + O2 = Cr(3+) + superoxide + 2 NAD(+) + 2 H(+). The catalysed reaction is Cr(6+) + 2 NADPH + O2 = Cr(3+) + superoxide + 2 NADP(+) + 2 H(+). May be inhibited by divalent cations. Catalyzes the reduction of quinones. Acts by simultaneous two-electron transfer, avoiding formation of highly reactive semiquinone intermediates and producing quinols that promote tolerance of H(2)O(2). Quinone reduction is probably the primary biological role of ChrR. Can also reduce toxic chromate to insoluble and less toxic Cr(3+). Catalyzes the transfer of three electrons to Cr(6+) producing Cr(3+) and one electron to molecular oxygen. This reaction produces transiently a minimal amount of the toxic Cr(5+) species and reactive oxygen species (ROS). Chromate reduction protects the cell against chromate toxicity, but is likely a secondary activity. Can also reduce potassium ferricyanide and 2,6-dichloroindophenol. During chromate reduction, displays an eightfold preference for NADH over NADPH. The polypeptide is Quinone reductase (Pseudomonas putida (strain ATCC 47054 / DSM 6125 / CFBP 8728 / NCIMB 11950 / KT2440)).